The following is a 501-amino-acid chain: Lysine--tRNA ligase (501 aa).

Asp411 and Glu418 together coordinate Mg(2+).

Belongs to the class-II aminoacyl-tRNA synthetase family. In terms of assembly, homodimer. It depends on Mg(2+) as a cofactor.

The protein resides in the cytoplasm. It catalyses the reaction tRNA(Lys) + L-lysine + ATP = L-lysyl-tRNA(Lys) + AMP + diphosphate. This chain is Lysine--tRNA ligase, found in Mycolicibacterium gilvum (strain PYR-GCK) (Mycobacterium gilvum (strain PYR-GCK)).